The primary structure comprises 284 residues: 2-dehydro-3-deoxyphosphooctonate aldolase (284 aa).

The protein belongs to the KdsA family.

Its subcellular location is the cytoplasm. The catalysed reaction is D-arabinose 5-phosphate + phosphoenolpyruvate + H2O = 3-deoxy-alpha-D-manno-2-octulosonate-8-phosphate + phosphate. It functions in the pathway carbohydrate biosynthesis; 3-deoxy-D-manno-octulosonate biosynthesis; 3-deoxy-D-manno-octulosonate from D-ribulose 5-phosphate: step 2/3. The protein operates within bacterial outer membrane biogenesis; lipopolysaccharide biosynthesis. The chain is 2-dehydro-3-deoxyphosphooctonate aldolase from Pectobacterium atrosepticum (strain SCRI 1043 / ATCC BAA-672) (Erwinia carotovora subsp. atroseptica).